A 211-amino-acid chain; its full sequence is Uracil phosphoribosyltransferase (211 aa).

Residues Arg-78, Arg-103, and 130–138 contribute to the 5-phospho-alpha-D-ribose 1-diphosphate site; that span reads DPMLATGNS. Residues Ile-193 and 198–200 contribute to the uracil site; that span reads GDA. 5-phospho-alpha-D-ribose 1-diphosphate is bound at residue Asp-199.

Belongs to the UPRTase family. It depends on Mg(2+) as a cofactor.

It catalyses the reaction UMP + diphosphate = 5-phospho-alpha-D-ribose 1-diphosphate + uracil. Its pathway is pyrimidine metabolism; UMP biosynthesis via salvage pathway; UMP from uracil: step 1/1. With respect to regulation, allosterically activated by GTP. Its function is as follows. Catalyzes the conversion of uracil and 5-phospho-alpha-D-ribose 1-diphosphate (PRPP) to UMP and diphosphate. In Acinetobacter baumannii (strain AB307-0294), this protein is Uracil phosphoribosyltransferase.